A 136-amino-acid polypeptide reads, in one-letter code: Large ribosomal subunit protein uL16 (136 aa).

The protein belongs to the universal ribosomal protein uL16 family. Part of the 50S ribosomal subunit.

Functionally, binds 23S rRNA and is also seen to make contacts with the A and possibly P site tRNAs. This is Large ribosomal subunit protein uL16 from Aliivibrio fischeri (strain ATCC 700601 / ES114) (Vibrio fischeri).